The sequence spans 197 residues: RING-H2 finger protein ATL80 (197 aa).

The helical transmembrane segment at 30–50 (LVVILAALLCALICVLGLIAV) threads the bilayer. Residues 111–153 (CAICLAEFSAGDELRVLPQCGHGFHVACIDTWLGSHSSCPSCR) form an RING-type; atypical zinc finger. Positions 168–197 (PGSSSSGLESEPEIEIRIKQGEDDPNSFLP) are disordered.

Belongs to the RING-type zinc finger family. ATL subfamily.

The protein resides in the membrane. It carries out the reaction S-ubiquitinyl-[E2 ubiquitin-conjugating enzyme]-L-cysteine + [acceptor protein]-L-lysine = [E2 ubiquitin-conjugating enzyme]-L-cysteine + N(6)-ubiquitinyl-[acceptor protein]-L-lysine.. Its pathway is protein modification; protein ubiquitination. In terms of biological role, may be involved in the early steps of the plant defense signaling pathway. This is RING-H2 finger protein ATL80 (ATL80) from Arabidopsis thaliana (Mouse-ear cress).